The sequence spans 343 residues: ATPase GET3 (343 aa).

32–39 (KGGVGKTT) is an ATP binding site. Residue Asp61 is part of the active site. 2 residues coordinate ATP: Glu245 and Asn272. Zn(2+) is bound by residues Cys283 and Cys286.

Belongs to the arsA ATPase family. Homodimer.

Its subcellular location is the cytoplasm. It localises to the endoplasmic reticulum. ATPase required for the post-translational delivery of tail-anchored (TA) proteins to the endoplasmic reticulum. Recognizes and selectively binds the transmembrane domain of TA proteins in the cytosol. This complex then targets to the endoplasmic reticulum by membrane-bound receptors, where the tail-anchored protein is released for insertion. This process is regulated by ATP binding and hydrolysis. ATP binding drives the homodimer towards the closed dimer state, facilitating recognition of newly synthesized TA membrane proteins. ATP hydrolysis is required for insertion. Subsequently, the homodimer reverts towards the open dimer state, lowering its affinity for the membrane-bound receptor, and returning it to the cytosol to initiate a new round of targeting. This is ATPase GET3 from Pyricularia oryzae (strain 70-15 / ATCC MYA-4617 / FGSC 8958) (Rice blast fungus).